The primary structure comprises 520 residues: MKMTSIQQRAELHRQIWQIANDVRGSVDGWDFKQYVLGALFYRFISENFSSYIEAGDDSICYAKLDDSVITDDIKDDAIKTKGYFIYPSQLFCNVAAKANTNDRLNADLNSIFVAIESSAYGYPSEADIKGLFADFDTTSNRLGNTVKDKNARLAAVLKGVEGLKLGDFNEHQIDLFGDAYEFLISNYAANAGKSGGEFFTPQHVSKLIAQLAMHGQTHVNKIYDPAAGSGSLLLQAKKQFDDHIIEEGFFGQEINHTTYNLARMNMFLHNINYDKFDIKLGNTLTEPHFRDEKPFDAIVSNPPYSVKWIGSDDPTLINDERFAPAGVLAPKSKADFAFVLHALNYLSAKGRAAIVCFPGIFYRGGAEQKIRQYLVDNNYVETVISLAPNLFFGTTIAVNILVLSKHKTDTKVQFIDASELFKKETNNNILTDAHIEQIMQVFASKEDVAHLAKSVAFETVVANDYNLSVSSYVEAKDTREIIDIAELNAELKTTVSKIDQLRKDIDAIVAEIEGCEVQK.

Residues 198–203 (EFFTPQ), 230–232 (SGS), and E254 each bind S-adenosyl-L-methionine.

Belongs to the N(4)/N(6)-methyltransferase family. In terms of assembly, the type I restriction/modification system is composed of three polypeptides R, M and S; the restriction enzyme has stoichiometry R(2)M(2)S(1) while the methyltransferase is M(2)S(1).

The enzyme catalyses a 2'-deoxyadenosine in DNA + S-adenosyl-L-methionine = an N(6)-methyl-2'-deoxyadenosine in DNA + S-adenosyl-L-homocysteine + H(+). Functionally, the subtype gamma methyltransferase (M) subunit of a type I restriction enzyme. The M and S subunits together form a methyltransferase (MTase) that methylates two adenine residues of the sequence 5'-CCAN(7)ATGC-3'. In the presence of the R subunit the complex can also act as an endonuclease, binding to the same target sequence but cutting the DNA some distance from this site. Whether the DNA is cut or modified depends on the methylation state of the target sequence. When the target site is unmodified, the DNA is cut. When the target site is hemimethylated, the complex acts as a maintenance MTase modifying the DNA so that both strands become methylated. After locating a non-methylated recognition site, the enzyme complex serves as a molecular motor that translocates DNA in an ATP-dependent manner until a collision occurs that triggers cleavage. The sequence is that of Type I restriction enzyme EcoprrI methylase subunit from Escherichia coli.